We begin with the raw amino-acid sequence, 83 residues long: Phosphoribosylformylglycinamidine synthase subunit PurS (83 aa).

Belongs to the PurS family. Homodimer. Part of the FGAM synthase complex composed of 1 PurL, 1 PurQ and 2 PurS subunits.

The protein resides in the cytoplasm. The enzyme catalyses N(2)-formyl-N(1)-(5-phospho-beta-D-ribosyl)glycinamide + L-glutamine + ATP + H2O = 2-formamido-N(1)-(5-O-phospho-beta-D-ribosyl)acetamidine + L-glutamate + ADP + phosphate + H(+). Its pathway is purine metabolism; IMP biosynthesis via de novo pathway; 5-amino-1-(5-phospho-D-ribosyl)imidazole from N(2)-formyl-N(1)-(5-phospho-D-ribosyl)glycinamide: step 1/2. Part of the phosphoribosylformylglycinamidine synthase complex involved in the purines biosynthetic pathway. Catalyzes the ATP-dependent conversion of formylglycinamide ribonucleotide (FGAR) and glutamine to yield formylglycinamidine ribonucleotide (FGAM) and glutamate. The FGAM synthase complex is composed of three subunits. PurQ produces an ammonia molecule by converting glutamine to glutamate. PurL transfers the ammonia molecule to FGAR to form FGAM in an ATP-dependent manner. PurS interacts with PurQ and PurL and is thought to assist in the transfer of the ammonia molecule from PurQ to PurL. The chain is Phosphoribosylformylglycinamidine synthase subunit PurS from Methanocaldococcus jannaschii (strain ATCC 43067 / DSM 2661 / JAL-1 / JCM 10045 / NBRC 100440) (Methanococcus jannaschii).